The primary structure comprises 632 residues: tRNA uridine 5-carboxymethylaminomethyl modification enzyme MnmG (632 aa).

FAD is bound at residue 13-18; it reads GGGHAG. Position 273 to 287 (273 to 287) interacts with NAD(+); it reads GPRYCPSIEDKIHRF.

Belongs to the MnmG family. In terms of assembly, homodimer. Heterotetramer of two MnmE and two MnmG subunits. The cofactor is FAD.

Its subcellular location is the cytoplasm. Functionally, NAD-binding protein involved in the addition of a carboxymethylaminomethyl (cmnm) group at the wobble position (U34) of certain tRNAs, forming tRNA-cmnm(5)s(2)U34. This is tRNA uridine 5-carboxymethylaminomethyl modification enzyme MnmG from Psychrobacter cryohalolentis (strain ATCC BAA-1226 / DSM 17306 / VKM B-2378 / K5).